We begin with the raw amino-acid sequence, 183 residues long: Negative modulator of initiation of replication (183 aa).

Residues 90–91 (AV) are interaction with DNA.

This sequence belongs to the SeqA family. Homodimer. Polymerizes to form helical filaments.

The protein localises to the cytoplasm. In terms of biological role, negative regulator of replication initiation, which contributes to regulation of DNA replication and ensures that replication initiation occurs exactly once per chromosome per cell cycle. Binds to pairs of hemimethylated GATC sequences in the oriC region, thus preventing assembly of replication proteins and re-initiation at newly replicated origins. Repression is relieved when the region becomes fully methylated. The polypeptide is Negative modulator of initiation of replication (Shewanella oneidensis (strain ATCC 700550 / JCM 31522 / CIP 106686 / LMG 19005 / NCIMB 14063 / MR-1)).